Reading from the N-terminus, the 215-residue chain is Glycerol-3-phosphate acyltransferase (215 aa).

Helical transmembrane passes span 3-23 (LILLILTAYLLGSIPTGLWIG), 42-61 (TNTFRILGLKAGAATLLIDI), 68-90 (TLLPVLVGASNISPITIGFFAVL), 110-130 (AGVLLGFAPLYLLFLAAVFVL), 134-154 (LFSMISLASLTASVVAVISVL), and 162-182 (LLPSYDWLLTITIVVLAAIII).

Belongs to the PlsY family. In terms of assembly, probably interacts with PlsX.

It localises to the cell membrane. The catalysed reaction is an acyl phosphate + sn-glycerol 3-phosphate = a 1-acyl-sn-glycero-3-phosphate + phosphate. It participates in lipid metabolism; phospholipid metabolism. Its function is as follows. Catalyzes the transfer of an acyl group from acyl-phosphate (acyl-PO(4)) to glycerol-3-phosphate (G3P) to form lysophosphatidic acid (LPA). This enzyme utilizes acyl-phosphate as fatty acyl donor, but not acyl-CoA or acyl-ACP. The chain is Glycerol-3-phosphate acyltransferase from Streptococcus equi subsp. equi (strain 4047).